We begin with the raw amino-acid sequence, 552 residues long: 5'-AMP-activated protein kinase catalytic subunit alpha-2 (552 aa).

Positions 16 to 268 constitute a Protein kinase domain; that stretch reads YVLGDTLGVG…IKDIREHEWF (253 aa). ATP contacts are provided by residues 22 to 30 and K45; that span reads LGVGTFGKV. Residue D139 is the Proton acceptor of the active site. T172 carries the post-translational modification Phosphothreonine; by LKB1 and CaMKK2. The residue at position 258 (T258) is a Phosphothreonine. Residues 291–376 form an AIS region; that stretch reads EAVKEVCEKF…PERMPPLIAD (86 aa). Residue S377 is modified to Phosphoserine. The segment at 477–521 is disordered; sequence VEQRSGSSTPQRSCSAAGLHRPRSSFDSTTAESHSLSGSLTGSLT. Residues 480–490 are compositionally biased toward polar residues; the sequence is RSGSSTPQRSC. Phosphoserine is present on S491. The segment covering 501 to 510 has biased composition (polar residues); it reads SFDSTTAESH. Positions 511-521 are enriched in low complexity; that stretch reads SLSGSLTGSLT.

The protein belongs to the protein kinase superfamily. CAMK Ser/Thr protein kinase family. SNF1 subfamily. As to quaternary structure, AMPK is a heterotrimer of an alpha catalytic subunit (PRKAA1 or PRKAA2), a beta (PRKAB1 or PRKAB2) and a gamma non-catalytic subunits (PRKAG1, PRKAG2 or PRKAG3). Interacts with FNIP1 and FNIP2. Associates with internalized insulin receptor/INSR complexes on Golgi/endosomal membranes; PRKAA2/AMPK2 together with ATIC and HACD3/PTPLAD1 is proposed to be part of a signaling network regulating INSR autophosphorylation and endocytosis. Interacts with ARF6. The phosphorylated form at Thr-172 mediated by CamKK2 interacts with ACSS2. Mg(2+) is required as a cofactor. Ubiquitinated. In terms of processing, phosphorylated at Thr-172 by STK11/LKB1 in complex with STE20-related adapter-alpha (STRADA) pseudo kinase and CAB39. Also phosphorylated at Thr-172 by CAMKK2; triggered by a rise in intracellular calcium ions, without detectable changes in the AMP/ATP ratio. CAMKK1 can also phosphorylate Thr-172, but at much lower level. Dephosphorylated by protein phosphatase 2A and 2C (PP2A and PP2C). Phosphorylated by ULK1; leading to negatively regulate AMPK activity and suggesting the existence of a regulatory feedback loop between ULK1 and AMPK. Dephosphorylated by PPM1A and PPM1B at Thr-172 (mediated by STK11/LKB1).

Its subcellular location is the cytoplasm. It localises to the nucleus. The catalysed reaction is L-seryl-[protein] + ATP = O-phospho-L-seryl-[protein] + ADP + H(+). It catalyses the reaction L-threonyl-[protein] + ATP = O-phospho-L-threonyl-[protein] + ADP + H(+). It carries out the reaction L-seryl-[acetyl-CoA carboxylase] + ATP = O-phospho-L-seryl-[acetyl-CoA carboxylase] + ADP + H(+). The enzyme catalyses L-seryl-[3-hydroxy-3-methylglutaryl-coenzyme A reductase] + ATP = O-phospho-L-seryl-[3-hydroxy-3-methylglutaryl-coenzyme A reductase] + ADP + H(+). Activated by phosphorylation on Thr-172. Binding of AMP to non-catalytic gamma subunit (PRKAG1, PRKAG2 or PRKAG3) results in allosteric activation, inducing phosphorylation on Thr-172. AMP-binding to gamma subunit also sustains activity by preventing dephosphorylation of Thr-172. ADP also stimulates Thr-172 phosphorylation, without stimulating already phosphorylated AMPK. ATP promotes dephosphorylation of Thr-172, rendering the enzyme inactive. Under physiological conditions AMPK mainly exists in its inactive form in complex with ATP, which is much more abundant than AMP. AMPK is activated by antihyperglycemic drug metformin, a drug prescribed to patients with type 2 diabetes: in vivo, metformin seems to mainly inhibit liver gluconeogenesis. However, metformin can be used to activate AMPK in muscle and other cells in culture or ex vivo. Selectively inhibited by compound C (6-[4-(2-Piperidin-1-yl-ethoxy)-phenyl)]-3-pyridin-4-yl-pyyrazolo[1,5-a] pyrimidine. Activated by resveratrol, a natural polyphenol present in red wine, and S17834, a synthetic polyphenol. Salicylate/aspirin directly activates kinase activity, primarily by inhibiting Thr-172 dephosphorylation. Catalytic subunit of AMP-activated protein kinase (AMPK), an energy sensor protein kinase that plays a key role in regulating cellular energy metabolism. In response to reduction of intracellular ATP levels, AMPK activates energy-producing pathways and inhibits energy-consuming processes: inhibits protein, carbohydrate and lipid biosynthesis, as well as cell growth and proliferation. AMPK acts via direct phosphorylation of metabolic enzymes, and by longer-term effects via phosphorylation of transcription regulators. Regulates lipid synthesis by phosphorylating and inactivating lipid metabolic enzymes such as ACACA, ACACB, GYS1, HMGCR and LIPE; regulates fatty acid and cholesterol synthesis by phosphorylating acetyl-CoA carboxylase (ACACA and ACACB) and hormone-sensitive lipase (LIPE) enzymes, respectively. Promotes lipolysis of lipid droplets by mediating phosphorylation of isoform 1 of CHKA (CHKalpha2). Regulates insulin-signaling and glycolysis by phosphorylating IRS1, PFKFB2 and PFKFB3. Involved in insulin receptor/INSR internalization. AMPK stimulates glucose uptake in muscle by increasing the translocation of the glucose transporter SLC2A4/GLUT4 to the plasma membrane, possibly by mediating phosphorylation of TBC1D4/AS160. Regulates transcription and chromatin structure by phosphorylating transcription regulators involved in energy metabolism such as CRTC2/TORC2, FOXO3, histone H2B, HDAC5, MEF2C, MLXIPL/ChREBP, EP300, HNF4A, p53/TP53, SREBF1, SREBF2 and PPARGC1A. Acts as a key regulator of glucose homeostasis in liver by phosphorylating CRTC2/TORC2, leading to CRTC2/TORC2 sequestration in the cytoplasm. In response to stress, phosphorylates 'Ser-36' of histone H2B (H2BS36ph), leading to promote transcription. Acts as a key regulator of cell growth and proliferation by phosphorylating FNIP1, TSC2, RPTOR, WDR24 and ATG1/ULK1: in response to nutrient limitation, negatively regulates the mTORC1 complex by phosphorylating RPTOR component of the mTORC1 complex and by phosphorylating and activating TSC2. Also phosphorylates and inhibits GATOR2 subunit WDR24 in response to nutrient limitation, leading to suppress glucose-mediated mTORC1 activation. In response to energetic stress, phosphorylates FNIP1, inactivating the non-canonical mTORC1 signaling, thereby promoting nuclear translocation of TFEB and TFE3, and inducing transcription of lysosomal or autophagy genes. In response to nutrient limitation, promotes autophagy by phosphorylating and activating ATG1/ULK1. In that process, it also activates WDR45/WIPI4. Phosphorylates CASP6, thereby preventing its autoprocessing and subsequent activation. AMPK also acts as a regulator of circadian rhythm by mediating phosphorylation of CRY1, leading to destabilize it. May regulate the Wnt signaling pathway by phosphorylating CTNNB1, leading to stabilize it. Also acts as a regulator of cellular polarity by remodeling the actin cytoskeleton; probably by indirectly activating myosin. Also phosphorylates CFTR, EEF2K, KLC1, NOS3 and SLC12A1. Plays an important role in the differential regulation of pro-autophagy (composed of PIK3C3, BECN1, PIK3R4 and UVRAG or ATG14) and non-autophagy (composed of PIK3C3, BECN1 and PIK3R4) complexes, in response to glucose starvation. Can inhibit the non-autophagy complex by phosphorylating PIK3C3 and can activate the pro-autophagy complex by phosphorylating BECN1. Upon glucose starvation, promotes ARF6 activation in a kinase-independent manner leading to cell migration. Upon glucose deprivation mediates the phosphorylation of ACSS2 at 'Ser-659', which exposes the nuclear localization signal of ACSS2, required for its interaction with KPNA1 and nuclear translocation. Upon stress, regulates mitochondrial fragmentation through phosphorylation of MTFR1L. This chain is 5'-AMP-activated protein kinase catalytic subunit alpha-2, found in Homo sapiens (Human).